The sequence spans 170 residues: Bifunctional protein PyrR (170 aa).

The PRPP-binding motif lies at 90 to 102 (LVLIDDVLMSGRT).

It belongs to the purine/pyrimidine phosphoribosyltransferase family. PyrR subfamily.

The enzyme catalyses UMP + diphosphate = 5-phospho-alpha-D-ribose 1-diphosphate + uracil. Its function is as follows. Regulates the transcription of the pyrimidine nucleotide (pyr) operon in response to exogenous pyrimidines. Functionally, also displays a weak uracil phosphoribosyltransferase activity which is not physiologically significant. The sequence is that of Bifunctional protein PyrR from Pseudomonas syringae pv. tomato (strain ATCC BAA-871 / DC3000).